A 466-amino-acid chain; its full sequence is UDP-N-acetylmuramoylalanine--D-glutamate ligase (466 aa).

Residue 121 to 127 coordinates ATP; that stretch reads GTNGKST.

Belongs to the MurCDEF family.

Its subcellular location is the cytoplasm. It carries out the reaction UDP-N-acetyl-alpha-D-muramoyl-L-alanine + D-glutamate + ATP = UDP-N-acetyl-alpha-D-muramoyl-L-alanyl-D-glutamate + ADP + phosphate + H(+). Its pathway is cell wall biogenesis; peptidoglycan biosynthesis. Its function is as follows. Cell wall formation. Catalyzes the addition of glutamate to the nucleotide precursor UDP-N-acetylmuramoyl-L-alanine (UMA). The protein is UDP-N-acetylmuramoylalanine--D-glutamate ligase of Mesorhizobium japonicum (strain LMG 29417 / CECT 9101 / MAFF 303099) (Mesorhizobium loti (strain MAFF 303099)).